Here is a 266-residue protein sequence, read N- to C-terminus: Energy-coupling factor transporter transmembrane protein EcfT (266 aa).

7 helical membrane passes run V26–T46, L47–L67, G69–P89, L116–T136, L151–I171, S192–F212, and Y246–L266.

The protein belongs to the energy-coupling factor EcfT family. As to quaternary structure, forms a stable energy-coupling factor (ECF) transporter complex composed of 2 membrane-embedded substrate-binding proteins (S component), 2 ATP-binding proteins (A component) and 2 transmembrane proteins (T component). May be able to interact with more than 1 S component at a time.

The protein resides in the cell membrane. Functionally, transmembrane (T) component of an energy-coupling factor (ECF) ABC-transporter complex. Unlike classic ABC transporters this ECF transporter provides the energy necessary to transport a number of different substrates. The chain is Energy-coupling factor transporter transmembrane protein EcfT from Heliobacterium modesticaldum (strain ATCC 51547 / Ice1).